A 156-amino-acid chain; its full sequence is SsrA-binding protein (156 aa).

The protein belongs to the SmpB family.

The protein localises to the cytoplasm. Required for rescue of stalled ribosomes mediated by trans-translation. Binds to transfer-messenger RNA (tmRNA), required for stable association of tmRNA with ribosomes. tmRNA and SmpB together mimic tRNA shape, replacing the anticodon stem-loop with SmpB. tmRNA is encoded by the ssrA gene; the 2 termini fold to resemble tRNA(Ala) and it encodes a 'tag peptide', a short internal open reading frame. During trans-translation Ala-aminoacylated tmRNA acts like a tRNA, entering the A-site of stalled ribosomes, displacing the stalled mRNA. The ribosome then switches to translate the ORF on the tmRNA; the nascent peptide is terminated with the 'tag peptide' encoded by the tmRNA and targeted for degradation. The ribosome is freed to recommence translation, which seems to be the essential function of trans-translation. This chain is SsrA-binding protein, found in Thermoanaerobacter pseudethanolicus (strain ATCC 33223 / 39E) (Clostridium thermohydrosulfuricum).